A 499-amino-acid polypeptide reads, in one-letter code: Low-affinity inorganic phosphate transporter PitA (499 aa).

Residues Met-1–Leu-4 are Periplasmic-facing. A helical membrane pass occupies residues Phe-5–Phe-25. The Cytoplasmic portion of the chain corresponds to Tyr-26 to Gln-51. The chain crosses the membrane as a helical span at residues Leu-52–Val-72. Topologically, residues Ala-73 to Gly-93 are periplasmic. A helical transmembrane segment spans residues Leu-94–Phe-114. Over Gly-115–Thr-123 the chain is Cytoplasmic. Residues Leu-124–Val-144 form a helical membrane-spanning segment. Residues Asp-145–Ser-154 lie on the Periplasmic side of the membrane. The helical transmembrane segment at Ile-155–Phe-175 threads the bilayer. Topologically, residues Leu-176–Pro-206 are cytoplasmic. Residues Pro-207 to Ala-227 form a helical membrane-spanning segment. Over Asn-228 to Lys-232 the chain is Periplasmic. The helical transmembrane segment at Gly-233 to Met-253 threads the bilayer. At Asn-254–Tyr-381 the chain is on the cytoplasmic side. A helical transmembrane segment spans residues Ala-382–Trp-402. The Periplasmic segment spans residues Arg-403–Thr-429. Residues Ala-430–Leu-450 traverse the membrane as a helical segment. The Cytoplasmic portion of the chain corresponds to Ser-451 to Ser-472. A helical transmembrane segment spans residues Ile-473–Trp-493. Residues Leu-494–Leu-499 lie on the Periplasmic side of the membrane.

Belongs to the inorganic phosphate transporter (PiT) (TC 2.A.20) family. Pit subfamily.

It is found in the cell inner membrane. The enzyme catalyses phosphate(in) + H(+)(in) = phosphate(out) + H(+)(out). Low-affinity inorganic phosphate transporter. In Escherichia coli O157:H7, this protein is Low-affinity inorganic phosphate transporter PitA (pitA).